The following is a 1145-amino-acid chain: Probable ATP-dependent RNA helicase DHX34 (1145 aa).

A compositionally biased stretch (basic and acidic residues) spans 1 to 14 (MPPPRTREGRGHRD). Residues 1–27 (MPPPRTREGRGHRDRDHHRAPREEEAP) are disordered. Residues 174–334 (LQTLKEHQVV…FSHAPVVQVP (161 aa)) form the Helicase ATP-binding domain. Residue 187-194 (GDTGCGKS) participates in ATP binding. The DEAH box signature appears at 281-284 (DEVH). A Helicase C-terminal domain is found at 370-538 (AIDNKYPPEE…ALVLQMKSMS (169 aa)). 2 disordered regions span residues 726-764 (LKRQ…QRAD) and 1091-1114 (NTCP…PQKT). Ser-749 and Ser-750 each carry phosphoserine.

Belongs to the DEAD box helicase family. DEAH subfamily. Forms a complex with RUVBL1 and RUVBL2. Part of a complex composed of SMG1, DHX34 and UPF1; within the complex DHX34 acts as a scaffolding protein to facilitate SMG1 phosphorylation of UPF1. Interacts with UPF1, MOV10, EIF4A3, XRN2, SMG6, SMG7, SMG9, UPF3A, UPF3B, CASC3/MLN51, XRN1, DIS3 and DCP1A; the interactions are RNA-independent. Interacts with NCBP1/CPB80; the interaction is RNA-dependent. Interacts (via C-terminus) with SMG1; the interaction is RNA-independent.

The catalysed reaction is ATP + H2O = ADP + phosphate + H(+). Functionally, probable ATP-binding RNA helicase. Required for nonsense-mediated decay (NMD) degradation of mRNA transcripts containing premature stop codons. Promotes the phosphorylation of UPF1 along with its interaction with key NMD pathway proteins UPF2 and EIF4A3. Negatively regulates the nucleotide binding ability and ATP hydrolysis of the RUVBL1-RUVBL2 complex via induction of N-terminus conformation changes of the RUVBL2 subunits. The polypeptide is Probable ATP-dependent RNA helicase DHX34 (Mus musculus (Mouse)).